A 147-amino-acid polypeptide reads, in one-letter code: Phosphoribosyl-AMP cyclohydrolase (147 aa).

Asp91 contributes to the Mg(2+) binding site. Cys92 contacts Zn(2+). Positions 93 and 95 each coordinate Mg(2+). Residues Cys109 and Cys116 each coordinate Zn(2+).

The protein belongs to the PRA-CH family. As to quaternary structure, homodimer. The cofactor is Mg(2+). It depends on Zn(2+) as a cofactor.

Its subcellular location is the cytoplasm. The enzyme catalyses 1-(5-phospho-beta-D-ribosyl)-5'-AMP + H2O = 1-(5-phospho-beta-D-ribosyl)-5-[(5-phospho-beta-D-ribosylamino)methylideneamino]imidazole-4-carboxamide. It participates in amino-acid biosynthesis; L-histidine biosynthesis; L-histidine from 5-phospho-alpha-D-ribose 1-diphosphate: step 3/9. Catalyzes the hydrolysis of the adenine ring of phosphoribosyl-AMP. In Rhodopseudomonas palustris (strain BisB18), this protein is Phosphoribosyl-AMP cyclohydrolase.